Consider the following 129-residue polypeptide: Glycine cleavage system H protein (129 aa).

One can recognise a Lipoyl-binding domain in the interval 24–106; the sequence is TFTVGISEHA…YGDGWLFRIK (83 aa). At Lys-65 the chain carries N6-lipoyllysine.

The protein belongs to the GcvH family. As to quaternary structure, the glycine cleavage system is composed of four proteins: P, T, L and H. The cofactor is (R)-lipoate.

In terms of biological role, the glycine cleavage system catalyzes the degradation of glycine. The H protein shuttles the methylamine group of glycine from the P protein to the T protein. This chain is Glycine cleavage system H protein, found in Pseudoalteromonas atlantica (strain T6c / ATCC BAA-1087).